The primary structure comprises 340 residues: Heat-inducible transcription repressor HrcA (340 aa).

The protein belongs to the HrcA family.

Negative regulator of class I heat shock genes (grpE-dnaK-dnaJ and groELS operons). Prevents heat-shock induction of these operons. This chain is Heat-inducible transcription repressor HrcA, found in Burkholderia thailandensis (strain ATCC 700388 / DSM 13276 / CCUG 48851 / CIP 106301 / E264).